We begin with the raw amino-acid sequence, 387 residues long: SLC2A4 regulator (387 aa).

Disordered regions lie at residues 1–97 and 139–179; these read MERP…RATP and EALV…PPEA. Over residues 27–36 the composition is skewed to low complexity; the sequence is GPGPRAAPVT. A C2H2-type zinc finger spans residues 200 to 225; that stretch reads FQCLWKSCGKVLSTASAMQRHIRLVH. The Nuclear export signal motif lies at 253 to 263; that stretch reads LTDGLSSLTPV. Phosphoserine occurs at positions 264 and 268. Residues 283–305 are disordered; sequence EPPALPSPLRPPAPPLPPPPVLS. Positions 285–303 are enriched in pro residues; it reads PALPSPLRPPAPPLPPPPV. Positions 351 to 354 match the Nuclear localization signal motif; that stretch reads RKPR.

In terms of assembly, interacts with MEF2A. In terms of tissue distribution, according to PubMed:14630949, expressed in heart, skeletal muscle, liver, kidney and pancreas; undetectable in lung, placenta or brain. According to PubMed:14625278, ubiquitously expressed, with lowest expression in brain and ileum.

The protein localises to the cytoplasm. It localises to the nucleus. Transcription factor involved in SLC2A4 and HD gene transactivation. Binds to the consensus sequence 5'-GCCGGCG-3'. This chain is SLC2A4 regulator (SLC2A4RG), found in Homo sapiens (Human).